The primary structure comprises 677 residues: Pentatricopeptide repeat-containing protein At5g39350 (677 aa).

PPR repeat units lie at residues 48–78 (SGHI…MPQS), 79–113 (SLLS…GVKC), 116–146 (DGYT…ILRS), 151–181 (DKYV…MKNR), 182–216 (DVIS…SVDL), 217–251 (DHAT…RLGD), 252–282 (KIEV…MERR), 283–317 (DVIT…GVRP), 318–352 (NAVT…QVYS), 353–383 (DIII…ASKY), 384–418 (HTGP…DVEP), 419–453 (NIAT…GFMS), 454–488 (SLDA…HKSK), 489–523 (DVVL…GVTP), 524–554 (NEIT…MLEH), and 560–590 (RSNH…IPFE). A type E motif region spans residues 595-670 (VWGALLAACV…KPGHSTIEIR (76 aa)).

It belongs to the PPR family. PCMP-E subfamily.

The chain is Pentatricopeptide repeat-containing protein At5g39350 (PCMP-E16) from Arabidopsis thaliana (Mouse-ear cress).